The following is a 553-amino-acid chain: MSTDNNGGIKRPDGKVNAIDTDYQIGQDNVALKVGPFGLDIHNRVFAISGMAIVLFVVATLTFRQQVEPFFAGLRAWLVSNLDWFFLASGNVFVIVCLVLIVTPLGRVRIGGTEATPDYSYAGWLAMLFAAGMGIGLVFFGVSEPMSHFSSALGGVNIENGVRTDWAPLGGAVGDTDAASALGMAATIYHWALHPWSIYALLALGLAIFSFNKGLPLTMRSIFYPLFGERVWGWVGHIIDILAVVATVFGLATSLGYGASQAATGLNFLFGVPMTDTTQVVLIVVITALALISVVAGLDSGVKRLSEINMILAAMLLFFVIIVGPTMAILTGFFDNIASYITNIPALSMPFEREDVNYSQGWTAFYWAWWISWSPFVGMFIARVSRGRSVREFIICVILIPSTVCVLWMTAFGGTAISQYVNDGYEAVFNAELPLKLFAMLDVMPFAEITSVVGIILVVVFFITSSDSGSLVIDTIAAGGKVDAPTPQRVFWCTFEGLVAIALMLGGGLAAAQAMAVTTGLPFTIVLLVATVSLIKGLMDEPRLSTKAVKKDK.

Transmembrane regions (helical) follow at residues 43–63 (NRVF…TLTF), 85–105 (FFLA…VTPL), 122–142 (AGWL…FFGV), 191–211 (WALH…IFSF), 231–251 (VWGW…VFGL), 278–298 (TQVV…VAGL), 310–330 (MILA…MAIL), 362–382 (WTAF…MFIA), 393–413 (FIIC…TAFG), 443–463 (VMPF…VFFI), 490–510 (VFWC…GGLA), and 515–535 (MAVT…VSLI).

Belongs to the BCCT transporter (TC 2.A.15) family.

It is found in the cell inner membrane. Involved in the uptake of osmoprotectants. Can transport glycine betaine, proline and choline. This is Glycine betaine/proline/choline transporter VP1723 from Vibrio parahaemolyticus serotype O3:K6 (strain RIMD 2210633).